A 203-amino-acid polypeptide reads, in one-letter code: Xrcc4-like factor 1 (203 aa).

It belongs to the XRCC4-XLF family. XLF subfamily.

The protein resides in the nucleus. In terms of biological role, involved in double-strand break repair via non-homologous end joining (NHEJ); the repair of a double-strand break in DNA in which the two broken ends are rejoined with little or no sequence complementarity. Has a role in meiosis. The sequence is that of Xrcc4-like factor 1 (xlf1) from Schizosaccharomyces pombe (strain 972 / ATCC 24843) (Fission yeast).